A 303-amino-acid chain; its full sequence is Protoheme IX farnesyltransferase (303 aa).

Helical transmembrane passes span 26–46, 48–68, 98–118, 120–140, 148–168, 174–194, 221–241, 244–264, and 278–298; these read VVAL…PGMV, IDIL…AAAV, AILF…VWVN, LTAW…TFWL, IVIG…AVTG, ALLL…ALAV, ILLY…THML, LYLL…VAMM, and YSIV…YLLP.

It belongs to the UbiA prenyltransferase family. Protoheme IX farnesyltransferase subfamily.

It localises to the cell inner membrane. It catalyses the reaction heme b + (2E,6E)-farnesyl diphosphate + H2O = Fe(II)-heme o + diphosphate. The protein operates within porphyrin-containing compound metabolism; heme O biosynthesis; heme O from protoheme: step 1/1. Its function is as follows. Converts heme B (protoheme IX) to heme O by substitution of the vinyl group on carbon 2 of heme B porphyrin ring with a hydroxyethyl farnesyl side group. This is Protoheme IX farnesyltransferase from Saccharophagus degradans (strain 2-40 / ATCC 43961 / DSM 17024).